The following is a 229-amino-acid chain: Potassium/proton antiporter CemA (229 aa).

The next 4 membrane-spanning stretches (helical) occupy residues 7–27 (LASLPYLVSIIFLPWWVSLSF), 106–126 (IILHFSTNLICFAILSGYFFL), 154–174 (ILLVTDLWIGFHSTHGWELMI), and 189–209 (IISGLVSTFPVILDTIVKYWI).

This sequence belongs to the CemA family.

The protein localises to the plastid. Its subcellular location is the chloroplast inner membrane. It catalyses the reaction K(+)(in) + H(+)(out) = K(+)(out) + H(+)(in). Contributes to K(+)/H(+) antiport activity by supporting proton efflux to control proton extrusion and homeostasis in chloroplasts in a light-dependent manner to modulate photosynthesis. Prevents excessive induction of non-photochemical quenching (NPQ) under continuous-light conditions. Indirectly promotes efficient inorganic carbon uptake into chloroplasts. This Phalaenopsis aphrodite subsp. formosana (Moth orchid) protein is Potassium/proton antiporter CemA.